Reading from the N-terminus, the 250-residue chain is Diaminopimelate epimerase (250 aa).

Positions 11 and 60 each coordinate substrate. Cys69 acts as the Proton donor in catalysis. Substrate contacts are provided by residues 70-71 (GN), Asn164, and 182-183 (ER). Catalysis depends on Cys192, which acts as the Proton acceptor. 193–194 (GT) is a binding site for substrate.

This sequence belongs to the diaminopimelate epimerase family. As to quaternary structure, homodimer.

The protein localises to the cytoplasm. The catalysed reaction is (2S,6S)-2,6-diaminopimelate = meso-2,6-diaminopimelate. It functions in the pathway amino-acid biosynthesis; L-lysine biosynthesis via DAP pathway; DL-2,6-diaminopimelate from LL-2,6-diaminopimelate: step 1/1. In terms of biological role, catalyzes the stereoinversion of LL-2,6-diaminopimelate (L,L-DAP) to meso-diaminopimelate (meso-DAP), a precursor of L-lysine and an essential component of the bacterial peptidoglycan. In Nitratiruptor sp. (strain SB155-2), this protein is Diaminopimelate epimerase.